We begin with the raw amino-acid sequence, 309 residues long: Beta-lactamase (309 aa).

Positions 1-28 (MMILKNKRMLKIGICVGILGLSITSLEA) are cleaved as a signal peptide. The active-site Acyl-ester intermediate is the S92. E188 functions as the Proton acceptor in the catalytic mechanism. Position 254-256 (254-256 (KSG)) interacts with substrate.

The protein belongs to the class-A beta-lactamase family.

The catalysed reaction is a beta-lactam + H2O = a substituted beta-amino acid. In terms of biological role, this protein is a beta-lactamase with a substrate specificity for penicillins. The polypeptide is Beta-lactamase (bla) (Bacillus thuringiensis).